A 329-amino-acid chain; its full sequence is 4-hydroxythreonine-4-phosphate dehydrogenase (329 aa).

2 residues coordinate substrate: His136 and Thr137. Positions 166, 211, and 266 each coordinate a divalent metal cation. Positions 274, 283, and 292 each coordinate substrate.

Belongs to the PdxA family. Homodimer. Requires Zn(2+) as cofactor. Mg(2+) is required as a cofactor. The cofactor is Co(2+).

The protein localises to the cytoplasm. It catalyses the reaction 4-(phosphooxy)-L-threonine + NAD(+) = 3-amino-2-oxopropyl phosphate + CO2 + NADH. It functions in the pathway cofactor biosynthesis; pyridoxine 5'-phosphate biosynthesis; pyridoxine 5'-phosphate from D-erythrose 4-phosphate: step 4/5. Catalyzes the NAD(P)-dependent oxidation of 4-(phosphooxy)-L-threonine (HTP) into 2-amino-3-oxo-4-(phosphooxy)butyric acid which spontaneously decarboxylates to form 3-amino-2-oxopropyl phosphate (AHAP). In Escherichia fergusonii (strain ATCC 35469 / DSM 13698 / CCUG 18766 / IAM 14443 / JCM 21226 / LMG 7866 / NBRC 102419 / NCTC 12128 / CDC 0568-73), this protein is 4-hydroxythreonine-4-phosphate dehydrogenase.